The chain runs to 1382 residues: DNA-directed RNA polymerase subunit beta' (1382 aa).

The Zn(2+) site is built by cysteine 70, cysteine 72, cysteine 85, and cysteine 88. Mg(2+) contacts are provided by aspartate 460, aspartate 462, and aspartate 464. Zn(2+) is bound by residues cysteine 808, cysteine 882, cysteine 889, and cysteine 892.

This sequence belongs to the RNA polymerase beta' chain family. As to quaternary structure, the RNAP catalytic core consists of 2 alpha, 1 beta, 1 beta' and 1 omega subunit. When a sigma factor is associated with the core the holoenzyme is formed, which can initiate transcription. Requires Mg(2+) as cofactor. The cofactor is Zn(2+).

It catalyses the reaction RNA(n) + a ribonucleoside 5'-triphosphate = RNA(n+1) + diphosphate. Its function is as follows. DNA-dependent RNA polymerase catalyzes the transcription of DNA into RNA using the four ribonucleoside triphosphates as substrates. The sequence is that of DNA-directed RNA polymerase subunit beta' from Citrifermentans bemidjiense (strain ATCC BAA-1014 / DSM 16622 / JCM 12645 / Bem) (Geobacter bemidjiensis).